The chain runs to 105 residues: UPF0060 membrane protein Rmet_4032 (105 aa).

A run of 4 helical transmembrane segments spans residues 4-24 (VGLY…PYLW), 28-48 (GASP…AWLL), 60-80 (AAYG…VDGV), and 82-102 (PSPW…IIVF).

This sequence belongs to the UPF0060 family.

It localises to the cell inner membrane. The chain is UPF0060 membrane protein Rmet_4032 from Cupriavidus metallidurans (strain ATCC 43123 / DSM 2839 / NBRC 102507 / CH34) (Ralstonia metallidurans).